We begin with the raw amino-acid sequence, 219 residues long: RPA-interacting protein (219 aa).

Phosphoserine is present on Ser-18. The RIP-type zinc-finger motif lies at 137 to 212 (CPVCIKYNLR…PSLLMNCLTC (76 aa)). Positions 164 to 180 (STDLTEQKLRACLEENV) are mediates nuclear export.

In terms of assembly, interacts with the RPA1 subunit of RPA complex. Sumoylated; required for localization in the nuclear PML body and transport of RPA complex in PML body. Upon UV irradiation and during S phase, it is desumoylated, releasing RPA complex that is translocated to sites of DNA damage. Sumoylation takes place at different Lys residues.

The protein resides in the nucleus. In terms of biological role, mediates the import of RPA complex into the nucleus, possibly via some interaction with importin beta. Sumoylation mediates the localization of RPA complex into the PML body of the nucleus, thereby participating in RPA function in DNA metabolism. The protein is RPA-interacting protein (Rpain) of Mus musculus (Mouse).